A 631-amino-acid polypeptide reads, in one-letter code: Tumor protein p73 (631 aa).

Positions 1-43 are transactivation; that stretch reads MAQTSSSSSSTFEHLWSSLEPDSTYFDLPQPSQGTSEASGSEE. Disordered regions lie at residues 23-43 and 69-113; these read STYF…GSEE and SRAA…NTDY. The residue at position 24 (Thr-24) is a Phosphothreonine; by PLK1. The residue at position 25 (Tyr-25) is a Phosphotyrosine; by SRC and HCK. 2 stretches are compositionally biased toward polar residues: residues 30–43 and 86–100; these read QPSQ…GSEE and PTHS…TFDT. Tyr-91 is modified (phosphotyrosine; by ABL1). The DNA-binding stretch occupies residues 123–302; that stretch reads FQQSSTAKSA…DRKADEDHYR (180 aa). Zn(2+) is bound by residues Cys-186, His-189, Cys-250, and Cys-254. A compositionally biased stretch (polar residues) spans 306 to 315; sequence ALNESTTKNG. Residues 306–334 form a disordered region; the sequence is ALNESTTKNGAASKRAFKQSPPAIPALGT. The interaction with HIPK2 stretch occupies residues 337–372; that stretch reads KKRRHGDEDMFYMHVRGRENFEILMKVKESLELMEL. The interval 337 to 378 is oligomerization; it reads KKRRHGDEDMFYMHVRGRENFEILMKVKESLELMELVPQPLV. The PPxY motif motif lies at 477 to 481; that stretch reads PPPPY. One can recognise an SAM domain in the interval 479–545; it reads PPYHADPSLV…WRGLQDLKQS (67 aa). A Glycyl lysine isopeptide (Lys-Gly) (interchain with G-Cter in SUMO); alternate cross-link involves residue Lys-622. Lys-622 is covalently cross-linked (Glycyl lysine isopeptide (Lys-Gly) (interchain with G-Cter in SUMO2); alternate).

It belongs to the p53 family. As to quaternary structure, found in a complex with p53/TP53 and CABLES1. The C-terminal oligomerization domain binds to the ABL1 tyrosine kinase SH3 domain. Interacts with HECW2, HIPK2, RANBP9 and WWOX. Interacts (via SAM domain) with FBXO45 (via B30.2/SPRY domain). Interacts with YAP1 (phosphorylated form). Interacts with HCK (via SH3 domain); this inhibits TP73 activity and degradation. Interacts (via SAM domain) with NQO1; this interaction is NADH-dependent, stabilizes TP73 in response to oxidative stress and protects it from ubiquitin-independent degradation by the 20S proteasome. Zn(2+) serves as cofactor. Sumoylated on Lys-622, which potentiates proteasomal degradation but does not affect transcriptional activity. In terms of processing, phosphorylation by PLK1 and PLK3 inhibits the transcription regulator activity and pro-apoptotic function. Higher levels of phosphorylation seen in striatal neurons of. mutant huntingtin (htt) transgenic mice. Post-translationally, polyubiquitinated by RCHY1/PIRH2; leading to its degradation by the proteasome. Found in striatal neurons of mutant huntingtin (htt) transgenic mice (at protein level). Isoform 1 is expressed in the nasal epithelium, the vomeronasal organ, the hippocampus and the hypothalamus.

It localises to the nucleus. It is found in the cytoplasm. Participates in the apoptotic response to DNA damage. Isoforms containing the transactivation domain are pro-apoptotic, isoforms lacking the domain are anti-apoptotic and block the function of p53 and transactivating p73 isoforms. May be a tumor suppressor protein. Is an activator of FOXJ1 expression, essential for the positive regulation of lung ciliated cell differentiation. This Mus musculus (Mouse) protein is Tumor protein p73 (Tp73).